The primary structure comprises 129 residues: Iron-sulfur cluster assembly 1 homolog, mitochondrial (129 aa).

The transit peptide at 1–12 directs the protein to the mitochondrion; that stretch reads MSASLVRATVRA. Positions 57, 121, and 123 each coordinate Fe cation.

Belongs to the HesB/IscA family. As to quaternary structure, interacts with CRY2, but not with CRY1 (in vitro).

The protein resides in the mitochondrion. Functionally, involved in the maturation of mitochondrial 4Fe-4S proteins functioning late in the iron-sulfur cluster assembly pathway. Probably involved in the binding of an intermediate of Fe/S cluster assembly. In Bos taurus (Bovine), this protein is Iron-sulfur cluster assembly 1 homolog, mitochondrial (ISCA1).